A 445-amino-acid polypeptide reads, in one-letter code: Exodeoxyribonuclease 7 large subunit (445 aa).

The protein belongs to the XseA family. In terms of assembly, heterooligomer composed of large and small subunits.

The protein localises to the cytoplasm. The enzyme catalyses Exonucleolytic cleavage in either 5'- to 3'- or 3'- to 5'-direction to yield nucleoside 5'-phosphates.. Bidirectionally degrades single-stranded DNA into large acid-insoluble oligonucleotides, which are then degraded further into small acid-soluble oligonucleotides. The protein is Exodeoxyribonuclease 7 large subunit of Shewanella halifaxensis (strain HAW-EB4).